Reading from the N-terminus, the 201-residue chain is uncharacterized protein (201 aa).

This is an uncharacterized protein from Lepidoptera (butterflies and moths).